A 438-amino-acid chain; its full sequence is Coenzyme A disulfide reductase (438 aa).

An FAD-binding site is contributed by Gly-8–Glu-33. Residues Thr-15, Gln-19, Arg-22, Ser-39, and Asn-42 each contribute to the substrate site. The Nucleophile role is filled by Cys-43. The Redox-active role is filled by Cys-43. Position 71 (Lys-71) interacts with substrate. Val-151–Asn-166 contacts NADP(+). An FAD-binding site is contributed by Thr-267–Asp-277. His-299 contributes to the substrate binding site. Tyr-419 serves as a coordination point for FAD. Substrate is bound at residue Lys-427.

The protein belongs to the class-III pyridine nucleotide-disulfide oxidoreductase family. Homodimer. Requires FAD as cofactor.

The enzyme catalyses NADP(+) + 2 CoA = CoA-disulfide + NADPH + H(+). Catalyzes specifically the NADPH-dependent reduction of coenzyme A disulfide. In Staphylococcus aureus (strain bovine RF122 / ET3-1), this protein is Coenzyme A disulfide reductase.